Here is a 96-residue protein sequence, read N- to C-terminus: Small ribosomal subunit protein bS6 (96 aa).

Belongs to the bacterial ribosomal protein bS6 family.

In terms of biological role, binds together with bS18 to 16S ribosomal RNA. The polypeptide is Small ribosomal subunit protein bS6 (Streptococcus thermophilus (strain ATCC BAA-491 / LMD-9)).